Reading from the N-terminus, the 503-residue chain is REST corepressor 2 (503 aa).

Residues 1–62 (MPSVMEKSHG…IPECKPDNTS (62 aa)) are disordered. Positions 41 to 126 (SMIRVGSDYQ…RSLADLANFT (86 aa)) constitute an ELM2 domain. The 52-residue stretch at 127–178 (PFPEEWSVEDKVLFEQAFSFHGKSFQRIQQMLPEKLIPSLVKYYYSWKKTRS) folds into the SANT 1 domain. 2 coiled-coil regions span residues 182–206 (VMDR…DQIK) and 286–314 (QLET…SLEG). Residues 327–378 (KLNARWTTDEQLLAVQAVRKYGKDFQAISEVLGNKTPSQVKTFFISYRRRFN) enclose the SANT 2 domain. The tract at residues 385–503 (EWEAEQEPSP…VGSHAESTFS (119 aa)) is disordered. The span at 399 to 412 (TDMSNKTSGSSQTP) shows a compositional bias: polar residues. Low complexity predominate over residues 423 to 442 (SVSSSSQPAPPAAAAAASLS).

It belongs to the CoREST family.

Its subcellular location is the nucleus. Functionally, may act as a component of a corepressor complex that represses transcription. This is REST corepressor 2 (rcor2) from Xenopus laevis (African clawed frog).